Reading from the N-terminus, the 926-residue chain is Protein O-mannosyl-transferase Tmtc3 (926 aa).

The interval 1–26 is disordered; sequence MSTNPNPGIHQYAPSTLPREREREGA. Over 1 to 36 the chain is Cytoplasmic; that stretch reads MSTNPNPGIHQYAPSTLPREREREGATNSPQRNLLE. Residues 37-57 form a helical membrane-spanning segment; it reads FLCICVACIVCYYNSTQCGLV. At 58–114 the chain is on the extracellular side; that stretch reads FDDISAIRDNKDLRPHTPLINVFLNDFWGTPMRKEQSHKSYRPLTVLTFRFNYLLHA. The chain crosses the membrane as a helical span at residues 115-135; it reads LEPFGYHLVNLLLHLSVCLLW. The Cytoplasmic segment spans residues 136–169; it reads RRVCRLLLRQCAASGSNAISAPSSSSVSQLNTCA. A helical membrane pass occupies residues 170-190; that stretch reads FVASLLFAVHPVHTEAVTGVV. Topologically, residues 191-192 are extracellular; sequence GR. A helical transmembrane segment spans residues 193 to 213; that stretch reads AELLSSICFLAAFLSYAKSVG. At 214–222 the chain is on the cytoplasmic side; it reads DSGCPRRTN. The next 2 helical transmembrane spans lie at 223–239 and 240–259; these read WLTL…ASML and CKEQ…LFVV. Over 260–303 the chain is Cytoplasmic; that stretch reads HQLRPLHLCHFVLRLFDERTEQQSPKLANPSGIRRWSSSTLWKR. The helical transmembrane segment at 304 to 324 threads the bilayer; that stretch reads LSFLVGITLTLLVGRVYVMGS. Residues 325–345 are Extracellular-facing; the sequence is QLPIFTRFDNPASAADTPERQ. Residues 346–366 form a helical membrane-spanning segment; it reads LTYGYLIYLNCWLLLCPSLLC. The Cytoplasmic portion of the chain corresponds to 367 to 384; it reads CDWTMGTVPLLQGFTDSR. Residues 385–405 traverse the membrane as a helical segment; the sequence is NITTLLTFLALGAMVAKTCFT. The Extracellular portion of the chain corresponds to 406-419; sequence RNLALSRTLIMCLG. Residues 420–440 form a helical membrane-spanning segment; sequence WMVLPFLPASNLFFPVGFVVA. Residues 441 to 442 lie on the Cytoplasmic side of the membrane; sequence ER. Residues 443–463 traverse the membrane as a helical segment; that stretch reads ILYMPSMGYCLLVAYGFEQLQ. At 464–926 the chain is on the extracellular side; sequence RRGSLSWQRF…RPTHKSRKRS (463 aa). TPR repeat units follow at residues 514–547, 548–581, 596–630, 631–664, 665–698, 736–769, 770–803, 805–838, and 839–872; these read AKLY…QTDD, IGAH…FPQA, LNVF…RSDY, VQAY…DNEN, ADIY…YPEH, EKVY…KADF, RSAL…HPSH, KGLI…DPHN, and TQGL…APAE. N-linked (GlcNAc...) asparagine glycosylation is found at asparagine 609 and asparagine 645.

It belongs to the TMTC family.

The protein localises to the membrane. Its subcellular location is the endoplasmic reticulum. It carries out the reaction a di-trans,poly-cis-dolichyl beta-D-mannosyl phosphate + L-seryl-[protein] = 3-O-(alpha-D-mannosyl)-L-seryl-[protein] + a di-trans,poly-cis-dolichyl phosphate + H(+). It catalyses the reaction a di-trans,poly-cis-dolichyl beta-D-mannosyl phosphate + L-threonyl-[protein] = 3-O-(alpha-D-mannosyl)-L-threonyl-[protein] + a di-trans,poly-cis-dolichyl phosphate + H(+). The protein operates within protein modification; protein glycosylation. In terms of biological role, transfers mannosyl residues to the hydroxyl group of serine or threonine residues. This is Protein O-mannosyl-transferase Tmtc3 from Drosophila melanogaster (Fruit fly).